The primary structure comprises 1167 residues: Integrin alpha-10 (1167 aa).

Residues 1-22 (MELPFVTHLFLPLVFLTGLCSP) form the signal peptide. The Extracellular portion of the chain corresponds to 23–1122 (FNLDEHHPRL…VVQTRPILIS (1100 aa)). FG-GAP repeat units lie at residues 24 to 85 (NLDE…HNAP) and 95 to 154 (QLGN…PQGS). A disulfide bond links Cys76 and Cys86. Asn98, Asn234, Asn336, and Asn364 each carry an N-linked (GlcNAc...) asparagine glycan. A VWFA domain is found at 167 to 350 (DVVIVLDGSN…AALTDIVDAL (184 aa)). FG-GAP repeat units follow at residues 361–412 (HAEN…LFPP), 417–470 (EDEF…KDGA), 472–534 (RVAQ…SLLT), 535–593 (LQGT…GVRP), and 597–657 (QRIA…VTPQ). The Ca(2+) site is built by Asp494, Asp496, Asp498, Asp502, Asp558, Asn560, Asp562, Asp566, Asp620, Asp622, Asp624, and Asp628. Cystine bridges form between Cys666/Cys675 and Cys681/Cys736. N-linked (GlcNAc...) asparagine glycosylation is found at Asn733 and Asn763. The cysteines at positions 789 and 795 are disulfide-linked. N-linked (GlcNAc...) asparagine glycans are attached at residues Asn839, Asn921, Asn1011, Asn1018, and Asn1039. Residues 1123–1145 (LWILIGSVLGGLLLLALLVFCLW) traverse the membrane as a helical segment. The Cytoplasmic portion of the chain corresponds to 1146 to 1167 (KLGFFAHKKIPEEEKREEKLEQ).

This sequence belongs to the integrin alpha chain family. As to quaternary structure, heterodimer of an alpha and a beta subunit. Alpha-10 associates with beta-1. In terms of tissue distribution, widely expressed with highest expression in muscle and heart. Found in articular cartilage.

The protein resides in the membrane. Its function is as follows. Integrin alpha-10/beta-1 is a receptor for collagen. In Homo sapiens (Human), this protein is Integrin alpha-10 (ITGA10).